The primary structure comprises 185 residues: Ovomucoid (185 aa).

Kazal-like domains follow at residues Val1–Glu63, Ala64–Lys128, and Ala131–Cys185. Intrachain disulfides connect Cys5-Cys43, Cys22-Cys40, Cys30-Cys61, Cys69-Cys108, Cys86-Cys105, Cys94-Cys126, Cys137-Cys167, Cys145-Cys164, and Cys153-Cys185. Asn174 is a glycosylation site (N-linked (GlcNAc...) asparagine).

It is found in the secreted. The protein is Ovomucoid of Meleagris gallopavo (Wild turkey).